A 197-amino-acid polypeptide reads, in one-letter code: Putative glutathione-dependent formaldehyde-activating enzyme (197 aa).

Positions 22 to 171 constitute a CENP-V/GFA domain; the sequence is FPGGKLYCHC…LKSLGLENYD (150 aa). The Zn(2+) site is built by Cys-29, Cys-31, Cys-50, Cys-52, Cys-55, Cys-97, and Cys-100.

This sequence belongs to the Gfa family. Zn(2+) serves as cofactor.

The catalysed reaction is S-(hydroxymethyl)glutathione = glutathione + formaldehyde. It participates in one-carbon metabolism; formaldehyde degradation; formate from formaldehyde (glutathione route): step 1/3. Its function is as follows. Catalyzes the condensation of formaldehyde and glutathione to S-hydroxymethylglutathione. The polypeptide is Putative glutathione-dependent formaldehyde-activating enzyme (Emericella nidulans (strain FGSC A4 / ATCC 38163 / CBS 112.46 / NRRL 194 / M139) (Aspergillus nidulans)).